Reading from the N-terminus, the 565-residue chain is MEKIVLLLAIVSLVKSDQICIGYHANNSTEQVDTIMEKNVTVTHAQDILEKTHNGKLCDLDGVKPLILRDCSVAGWLLGNPMCDEFINVPEWSYIVEKANPANDLCYPGNFNDYEELKHLLSRINHFEKIQIIPKSSWSDHEASLGVSSACPYQGSSSFFRNVVWLIKKNNAYPTIKRSYNNTNQEDLLVLWGIHHPNDEAEQTRLYQNPTTYISIGTSTLNQRLVPKIATRSKVNGQSGRMDFFWTILKPNDAINFESNGNFIAPEYAYKIVKKGDSAIMKSEVEYGNCNTKCQTPMGAINSSMPFHNIHPLTIGECPKYVKSNKLVLATGLRNSPQRERRRKRGLFGAIAGFIEGGWQGMVDGWYGYHHSNEQGSGYAADKESTQKAIDGVTNKVNSIIDKMNTQFEAVGREFNNLERRIENLNKKMEDGFLDVWTYNAELLVLMENERTLDFHDSNVKNLYDKVRLQLRDNAKELGNGCFEFYHKCDNECMESVRNGTYDYPQYSEEARLKREEISGVKLESIGTYQILSIYSTVASSLVLAIMVAGLSLWMCSNGSLQCRI.

Residues 1-16 form the signal peptide; the sequence is MEKIVLLLAIVSLVKS. Topologically, residues 17-530 are extracellular; that stretch reads DQICIGYHAN…VKLESIGTYQ (514 aa). Cystine bridges form between Cys-20–Cys-482, Cys-58–Cys-290, Cys-71–Cys-83, Cys-106–Cys-151, Cys-294–Cys-318, and Cys-489–Cys-493. Residues Asn-26, Asn-27, and Asn-39 are each glycosylated (N-linked (GlcNAc...) asparagine; by host). N-linked (GlcNAc...) asparagine; by host glycans are attached at residues Asn-181 and Asn-302. Residue Asn-499 is glycosylated (N-linked (GlcNAc...) asparagine; by host). Residues 531 to 551 traverse the membrane as a helical segment; that stretch reads ILSIYSTVASSLVLAIMVAGL. Over 552-565 the chain is Cytoplasmic; sequence SLWMCSNGSLQCRI. 2 S-palmitoyl cysteine; by host lipidation sites follow: Cys-556 and Cys-563.

The protein belongs to the influenza viruses hemagglutinin family. Homotrimer of disulfide-linked HA1-HA2. Post-translationally, palmitoylated. In natural infection, inactive HA is matured into HA1 and HA2 outside the cell by one or more trypsin-like, arginine-specific endoprotease secreted by the bronchial epithelial cells. One identified protease that may be involved in this process is secreted in lungs by club cells.

The protein resides in the virion membrane. It is found in the host apical cell membrane. Binds to sialic acid-containing receptors on the cell surface, bringing about the attachment of the virus particle to the cell. This attachment induces virion internalization either through clathrin-dependent endocytosis or through clathrin- and caveolin-independent pathway. Plays a major role in the determination of host range restriction and virulence. Class I viral fusion protein. Responsible for penetration of the virus into the cell cytoplasm by mediating the fusion of the membrane of the endocytosed virus particle with the endosomal membrane. Low pH in endosomes induces an irreversible conformational change in HA2, releasing the fusion hydrophobic peptide. Several trimers are required to form a competent fusion pore. This is Hemagglutinin from Influenza A virus (strain A/Goose/Guangxi/345/2005 H5N1 genotype G).